The chain runs to 147 residues: Globin, polymeric component P2 (147 aa).

The 145-residue stretch at 2-146 folds into the Globin domain; that stretch reads PLTADQVAAL…ISDALVAGLE (145 aa). His96 serves as a coordination point for heme b.

This sequence belongs to the globin family. In terms of assembly, polymer.

The chain is Globin, polymeric component P2 from Glycera dibranchiata (Bloodworm).